Consider the following 492-residue polypeptide: Histone-lysine N-methyltransferase SUVR4 (492 aa).

The interval 112 to 138 (ETRSASSGSSIQVVQKQPQLSNGDRKR) is disordered. Residues 113 to 133 (TRSASSGSSIQVVQKQPQLSN) show a composition bias toward polar residues. Zn(2+) is bound by residues C196, C197, C200, C204, C213, C281, C285, C287, and C291. Positions 196 to 299 (CCANCKGNCL…QCGNRVVQRG (104 aa)) constitute a Pre-SET domain. In terms of domain architecture, SET spans 302 to 435 (CQLQVYFTQE…AMDELTWDYM (134 aa)). S-adenosyl-L-methionine-binding positions include 313 to 315 (KGW) and 391 to 392 (NH). C394 serves as a coordination point for Zn(2+). Residue Y434 coordinates S-adenosyl-L-methionine. The 17-residue stretch at 446-462 (KAFRCCCGSESCRDRKI) folds into the Post-SET domain. Positions 450, 452, and 457 each coordinate Zn(2+). Residues 463–492 (KGSQGKSIERRKIVSAKKQQGSKEVSKKRK) are disordered.

Belongs to the class V-like SAM-binding methyltransferase superfamily. Histone-lysine methyltransferase family. In terms of assembly, interacts with ubiquitin.

It localises to the nucleus. The protein localises to the chromosome. The enzyme catalyses N(6)-methyl-L-lysyl(9)-[histone H3] + S-adenosyl-L-methionine = N(6),N(6)-dimethyl-L-lysyl(9)-[histone H3] + S-adenosyl-L-homocysteine + H(+). It catalyses the reaction N(6),N(6)-dimethyl-L-lysyl(9)-[histone H3] + S-adenosyl-L-methionine = N(6),N(6),N(6)-trimethyl-L-lysyl(9)-[histone H3] + S-adenosyl-L-homocysteine + H(+). Functionally, histone methyltransferase that converts monomethylated 'Lys-9' of histone H3 (H3K9me1) to dimethylated 'Lys-9' (H3K9me2) in the absence of bound ubiquitin, and to trimethylated 'Lys-9' (H3K9me3) in the presence of bound ubiquitin. Acts in a locus-specific manner and contributes to the transcriptional silencing of pseudogenes and transposons. H3 'Lys-9' methylation represents a specific tag for epigenetic transcriptional repression. In Arabidopsis thaliana (Mouse-ear cress), this protein is Histone-lysine N-methyltransferase SUVR4 (SUVR4).